Reading from the N-terminus, the 251-residue chain is ATP synthase subunit a (251 aa).

The next 5 helical transmembrane spans lie at 28–48 (TDTV…AFFL), 84–104 (IAPF…ISNW), 130–150 (INYV…AGIW), 192–212 (IFAG…IMWA), and 220–240 (FDLF…ILYF).

The protein belongs to the ATPase A chain family. In terms of assembly, F-type ATPases have 2 components, CF(1) - the catalytic core - and CF(0) - the membrane proton channel. CF(1) has five subunits: alpha(3), beta(3), gamma(1), delta(1), epsilon(1). CF(0) has three main subunits: a(1), b(2) and c(9-12). The alpha and beta chains form an alternating ring which encloses part of the gamma chain. CF(1) is attached to CF(0) by a central stalk formed by the gamma and epsilon chains, while a peripheral stalk is formed by the delta and b chains.

It is found in the cell membrane. Its function is as follows. Key component of the proton channel; it plays a direct role in the translocation of protons across the membrane. The sequence is that of ATP synthase subunit a from Mycobacterium leprae (strain TN).